We begin with the raw amino-acid sequence, 419 residues long: S-adenosylmethionine synthase (419 aa).

His14 lines the ATP pocket. Asp16 is a binding site for Mg(2+). Residue Glu42 coordinates K(+). Residues Glu55 and Gln98 each coordinate L-methionine. The segment at 98 to 108 (QSADINQGVDR) is flexible loop. ATP-binding positions include 164–166 (DAK), 242–243 (KF), Asp251, 257–258 (RK), Ala274, and Lys278. An L-methionine-binding site is contributed by Asp251. Residue Lys282 participates in L-methionine binding.

Belongs to the AdoMet synthase family. As to quaternary structure, homotetramer; dimer of dimers. Mg(2+) serves as cofactor. It depends on K(+) as a cofactor.

It localises to the cytoplasm. It catalyses the reaction L-methionine + ATP + H2O = S-adenosyl-L-methionine + phosphate + diphosphate. It participates in amino-acid biosynthesis; S-adenosyl-L-methionine biosynthesis; S-adenosyl-L-methionine from L-methionine: step 1/1. In terms of biological role, catalyzes the formation of S-adenosylmethionine (AdoMet) from methionine and ATP. The overall synthetic reaction is composed of two sequential steps, AdoMet formation and the subsequent tripolyphosphate hydrolysis which occurs prior to release of AdoMet from the enzyme. The sequence is that of S-adenosylmethionine synthase from Cytophaga hutchinsonii (strain ATCC 33406 / DSM 1761 / CIP 103989 / NBRC 15051 / NCIMB 9469 / D465).